The sequence spans 171 residues: 3-hydroxydecanoyl-[acyl-carrier-protein] dehydratase (171 aa).

Residue His-70 is part of the active site.

The protein belongs to the thioester dehydratase family. FabA subfamily. In terms of assembly, homodimer.

It is found in the cytoplasm. It catalyses the reaction a (3R)-hydroxyacyl-[ACP] = a (2E)-enoyl-[ACP] + H2O. The enzyme catalyses (3R)-hydroxydecanoyl-[ACP] = (2E)-decenoyl-[ACP] + H2O. The catalysed reaction is (2E)-decenoyl-[ACP] = (3Z)-decenoyl-[ACP]. Its pathway is lipid metabolism; fatty acid biosynthesis. In terms of biological role, necessary for the introduction of cis unsaturation into fatty acids. Catalyzes the dehydration of (3R)-3-hydroxydecanoyl-ACP to E-(2)-decenoyl-ACP and then its isomerization to Z-(3)-decenoyl-ACP. Can catalyze the dehydratase reaction for beta-hydroxyacyl-ACPs with saturated chain lengths up to 16:0, being most active on intermediate chain length. This Shewanella sp. (strain ANA-3) protein is 3-hydroxydecanoyl-[acyl-carrier-protein] dehydratase.